The following is a 209-amino-acid chain: Uracil phosphoribosyltransferase (209 aa).

Residues R79, R104, and 131-139 (DPMLATGGS) contribute to the 5-phospho-alpha-D-ribose 1-diphosphate site. Uracil contacts are provided by residues I194 and 199–201 (GDA). Residue D200 coordinates 5-phospho-alpha-D-ribose 1-diphosphate.

Belongs to the UPRTase family. It depends on Mg(2+) as a cofactor.

It catalyses the reaction UMP + diphosphate = 5-phospho-alpha-D-ribose 1-diphosphate + uracil. It functions in the pathway pyrimidine metabolism; UMP biosynthesis via salvage pathway; UMP from uracil: step 1/1. With respect to regulation, allosterically activated by GTP. Functionally, catalyzes the conversion of uracil and 5-phospho-alpha-D-ribose 1-diphosphate (PRPP) to UMP and diphosphate. This Clostridium botulinum (strain Alaska E43 / Type E3) protein is Uracil phosphoribosyltransferase.